The following is a 190-amino-acid chain: Apolipoprotein M (190 aa).

Residues 1-17 form the signal peptide; the sequence is MFHQVWAALLYLYGLLF. Intrachain disulfides connect Cys23/Cys169, Cys95/Cys185, and Cys130/Cys159. Residues Glu138 and Arg145 each coordinate tetradecanoate.

It belongs to the calycin superfamily. Lipocalin family. Highly divergent. As to quaternary structure, interacts with LRP2; LRP2 mediates APOM renal uptake and subsequent lysosomal degradation. In terms of tissue distribution, expressed by the liver; secreted in plasma.

Its subcellular location is the secreted. In terms of biological role, probably involved in lipid transport. Can bind sphingosine-1-phosphate, myristic acid, palmitic acid and stearic acid, retinol, all-trans-retinoic acid and 9-cis-retinoic acid. This Rattus norvegicus (Rat) protein is Apolipoprotein M (Apom).